The sequence spans 485 residues: Serine hydroxymethyltransferase, mitochondrial (485 aa).

Lys259 is modified (N6-(pyridoxal phosphate)lysine).

It belongs to the SHMT family. As to quaternary structure, homotetramer. The cofactor is pyridoxal 5'-phosphate.

The protein resides in the mitochondrion. It catalyses the reaction (6R)-5,10-methylene-5,6,7,8-tetrahydrofolate + glycine + H2O = (6S)-5,6,7,8-tetrahydrofolate + L-serine. It functions in the pathway one-carbon metabolism; tetrahydrofolate interconversion. In terms of biological role, interconversion of serine and glycine. The polypeptide is Serine hydroxymethyltransferase, mitochondrial (SHM1) (Candida glabrata (strain ATCC 2001 / BCRC 20586 / JCM 3761 / NBRC 0622 / NRRL Y-65 / CBS 138) (Yeast)).